The chain runs to 364 residues: Chorismate synthase (364 aa).

NADP(+) contacts are provided by R48 and R54. FMN-binding positions include 129 to 131 (RSS), 243 to 244 (NA), G288, 303 to 307 (KPTSS), and R329.

This sequence belongs to the chorismate synthase family. In terms of assembly, homotetramer. FMNH2 serves as cofactor.

The enzyme catalyses 5-O-(1-carboxyvinyl)-3-phosphoshikimate = chorismate + phosphate. It functions in the pathway metabolic intermediate biosynthesis; chorismate biosynthesis; chorismate from D-erythrose 4-phosphate and phosphoenolpyruvate: step 7/7. In terms of biological role, catalyzes the anti-1,4-elimination of the C-3 phosphate and the C-6 proR hydrogen from 5-enolpyruvylshikimate-3-phosphate (EPSP) to yield chorismate, which is the branch point compound that serves as the starting substrate for the three terminal pathways of aromatic amino acid biosynthesis. This reaction introduces a second double bond into the aromatic ring system. The sequence is that of Chorismate synthase from Chelativorans sp. (strain BNC1).